The chain runs to 296 residues: Ribosomal protein L11 methyltransferase (296 aa).

S-adenosyl-L-methionine contacts are provided by Thr-145, Gly-166, Asp-188, and Asn-230.

The protein belongs to the methyltransferase superfamily. PrmA family.

It localises to the cytoplasm. The enzyme catalyses L-lysyl-[protein] + 3 S-adenosyl-L-methionine = N(6),N(6),N(6)-trimethyl-L-lysyl-[protein] + 3 S-adenosyl-L-homocysteine + 3 H(+). Its function is as follows. Methylates ribosomal protein L11. The protein is Ribosomal protein L11 methyltransferase of Histophilus somni (strain 2336) (Haemophilus somnus).